We begin with the raw amino-acid sequence, 1025 residues long: Dihydropyrimidine dehydrogenase [NADP(+)] (1025 aa).

Residues 69–100 (ERGALREAMRCLKCADAPCQKSCPTNLDIKSF) form the 4Fe-4S ferredoxin-type 1 domain. Positions 79, 82, 87, and 91 each coordinate [4Fe-4S] cluster. Val129 contacts FAD. 4 residues coordinate [4Fe-4S] cluster: Cys130, Cys136, Cys140, and Gln156. FAD-binding positions include 194–198 (GAGPA), 218–226 (EKQEYVGGI), Arg235, and Leu261. Residues 340-343 (AGDT), 364-365 (RK), and Arg371 each bind NADP(+). The residue at position 384 (Lys384) is an N6-acetyllysine. Residues 437 to 439 (AFG) and 481 to 487 (DVVGIAN) contribute to the NADP(+) site. An FAD-binding site is contributed by 480 to 489 (GDVVGIANTT). FMN is bound by residues Ser550 and 574–575 (KT). Substrate-binding positions include Asn609 and 668–670 (NLS). Residue Cys671 is the Proton acceptor of the active site. Residue Lys709 participates in FMN binding. 736–737 (NT) lines the substrate pocket. Residues Gly767, 793–795 (TGG), and 816–817 (CS) each bind FMN. 2 4Fe-4S ferredoxin-type domains span residues 944–976 (VVAVIDEEMCINCGKCYMTCNDSGYQAIQFDPE) and 978–1007 (HLPTVTDTCTGCTLCLSVCPIIDCIKMVSR). Cys953, Cys956, Cys959, Cys963, Cys986, Cys989, Cys992, and Cys996 together coordinate [4Fe-4S] cluster.

It belongs to the dihydropyrimidine dehydrogenase family. In terms of assembly, homodimer. The cofactor is FAD. FMN is required as a cofactor. It depends on [4Fe-4S] cluster as a cofactor.

It is found in the cytoplasm. The enzyme catalyses 5,6-dihydrouracil + NADP(+) = uracil + NADPH + H(+). It catalyses the reaction 5,6-dihydrothymine + NADP(+) = thymine + NADPH + H(+). It functions in the pathway amino-acid biosynthesis; beta-alanine biosynthesis. Its activity is regulated as follows. Inactivated by 5-iodouracil. In terms of biological role, involved in pyrimidine base degradation. Catalyzes the reduction of uracil and thymine. Also involved the degradation of the chemotherapeutic drug 5-fluorouracil. The polypeptide is Dihydropyrimidine dehydrogenase [NADP(+)] (DPYD) (Bos taurus (Bovine)).